Reading from the N-terminus, the 435-residue chain is Diguanylate cyclase TpbB (435 aa).

At 1 to 22 (MNRRRRYTGSNPSLRRVLYRAH) the chain is on the cytoplasmic side. Residues 23–43 (LGVALVAVFTAGLAVTLVGLL) form a helical membrane-spanning segment. The Periplasmic segment spans residues 44–154 (TLRAYADPNQ…VKGSGGSLLR (111 aa)). The chain crosses the membrane as a helical span at residues 155–175 (FLLTGFAGMVLCLLLTALGAF). The Cytoplasmic portion of the chain corresponds to 176-435 (YLSRRLVRGI…DSATPEAPPK (260 aa)). The HAMP domain occupies 183-236 (RGIVGPLDQLAKVAHTVRRERDFEKRVPEAGIAELSQLGEDFNALLDELESWQA). The 137-residue stretch at 279–415 (EQLAVLFIDS…GSRRLAELND (137 aa)) folds into the GGDEF domain. Residues Ser-288 and Asp-330 each contribute to the Mg(2+) site. Catalysis depends on Asp-330, which acts as the Proton acceptor. The span at 413–426 (LNDPRILQEEKEID) shows a compositional bias: basic and acidic residues. Positions 413–435 (LNDPRILQEEKEIDSATPEAPPK) are disordered.

In terms of assembly, homodimer. Interacts with YfiR. Mg(2+) is required as a cofactor. In terms of processing, phosphorylated at both Tyr residues and Ser/Thr residues. Dephosphorylated and inactivated by TpbA.

It is found in the cell inner membrane. It carries out the reaction 2 GTP = 3',3'-c-di-GMP + 2 diphosphate. Its pathway is purine metabolism; 3',5'-cyclic di-GMP biosynthesis. Its activity is regulated as follows. Activity is tightly controlled by YfiR, a small periplasmic protein, and the OmpA/Pal-like outer-membrane lipoprotein YfiB. Diguanylate cyclase activity is inhibited by the specific interaction of YfiR with the TpbB periplasmic domain and is activated by YfiB, which releases the YfiR-mediated repression through sequestration of YfiR to the outer membrane. Release of repression leads to a conformational shift in TpbB/YfiN that propagates through the PAS and transmembrane domains to switch the cytoplasmic HAMP domain from an inactive to an active conformation and activate the C-terminal catalytic GGDEF domain. Thus, TpbB/YfiN appears to function by switching between discrete inactive and active functional states depending on the presence or absence of bound YfiR. Activity is also controlled by dephosphorylation of the periplasmic domain by the tyrosine phosphatase TpbA. These two mechanisms of regulation could in principle work in parallel or as part of the same regulatory pathway. Does not undergo product feedback inhibition. Its function is as follows. Catalyzes the synthesis of cyclic-di-GMP (c-di-GMP) via the condensation of 2 GTP molecules. Part of the YfiB-TpbB-YfiR (or yfiBNR) system, encoding a tripartite signaling module that modulates intracellular c-di-GMP levels. The system is a key regulator of the small colony variant (SCV) phenotype, and plays an important role in biofilm formation and in vivo persistence. The c-di-GMP produced by TpbB/YfiN stimulates the production of the Pel and Psl exopolysaccharides, which promotes surface attachment, generates an SCV phenotype and confers resistance against phagocytosis. This is Diguanylate cyclase TpbB from Pseudomonas aeruginosa (strain ATCC 15692 / DSM 22644 / CIP 104116 / JCM 14847 / LMG 12228 / 1C / PRS 101 / PAO1).